The following is a 298-amino-acid chain: Cyclin-D4-2 (298 aa).

It belongs to the cyclin family. Cyclin D subfamily. In terms of assembly, interacts with CDKA-1 to form a kinase complex.

Functionally, may promote cell division. This chain is Cyclin-D4-2 (CYCD4-2), found in Arabidopsis thaliana (Mouse-ear cress).